A 418-amino-acid chain; its full sequence is Light-independent protochlorophyllide reductase subunit N (418 aa).

Positions 17, 42, and 103 each coordinate [4Fe-4S] cluster.

This sequence belongs to the BchN/ChlN family. Protochlorophyllide reductase is composed of three subunits; ChlL, ChlN and ChlB. Forms a heterotetramer of two ChlB and two ChlN subunits. [4Fe-4S] cluster is required as a cofactor.

The catalysed reaction is chlorophyllide a + oxidized 2[4Fe-4S]-[ferredoxin] + 2 ADP + 2 phosphate = protochlorophyllide a + reduced 2[4Fe-4S]-[ferredoxin] + 2 ATP + 2 H2O. It participates in porphyrin-containing compound metabolism; chlorophyll biosynthesis (light-independent). Functionally, component of the dark-operative protochlorophyllide reductase (DPOR) that uses Mg-ATP and reduced ferredoxin to reduce ring D of protochlorophyllide (Pchlide) to form chlorophyllide a (Chlide). This reaction is light-independent. The NB-protein (ChlN-ChlB) is the catalytic component of the complex. The protein is Light-independent protochlorophyllide reductase subunit N of Prochlorococcus marinus (strain SARG / CCMP1375 / SS120).